A 383-amino-acid polypeptide reads, in one-letter code: Lipoyl synthase, mitochondrial (383 aa).

The transit peptide at 1 to 19 (MHASTLTRCMRVAQNARCL) directs the protein to the mitochondrion. Residues 69-97 (DAAPGTKPSRKPNASNRKPKWLKAQPTQG) form a disordered region. [4Fe-4S] cluster-binding residues include Cys-116, Cys-121, Cys-127, Cys-147, Cys-151, Cys-154, and Ser-362. Positions 132 to 351 (KDGIATATIM…QKVAEQMGFL (220 aa)) constitute a Radical SAM core domain.

It belongs to the radical SAM superfamily. Lipoyl synthase family. [4Fe-4S] cluster serves as cofactor.

The protein resides in the mitochondrion. It catalyses the reaction [[Fe-S] cluster scaffold protein carrying a second [4Fe-4S](2+) cluster] + N(6)-octanoyl-L-lysyl-[protein] + 2 oxidized [2Fe-2S]-[ferredoxin] + 2 S-adenosyl-L-methionine + 4 H(+) = [[Fe-S] cluster scaffold protein] + N(6)-[(R)-dihydrolipoyl]-L-lysyl-[protein] + 4 Fe(3+) + 2 hydrogen sulfide + 2 5'-deoxyadenosine + 2 L-methionine + 2 reduced [2Fe-2S]-[ferredoxin]. It participates in protein modification; protein lipoylation via endogenous pathway; protein N(6)-(lipoyl)lysine from octanoyl-[acyl-carrier-protein]: step 2/2. Its function is as follows. Catalyzes the radical-mediated insertion of two sulfur atoms into the C-6 and C-8 positions of the octanoyl moiety bound to the lipoyl domains of lipoate-dependent enzymes, thereby converting the octanoylated domains into lipoylated derivatives. In Phytophthora infestans (strain T30-4) (Potato late blight agent), this protein is Lipoyl synthase, mitochondrial.